The sequence spans 137 residues: Protein E6 (137 aa).

2 zinc fingers span residues 17 to 53 (CLWC…CTIC) and 90 to 127 (CCYC…CYDC).

This sequence belongs to the papillomaviridae E6 protein family. Forms homodimers. Interacts with ubiquitin-protein ligase UBE3A/E6-AP; this interaction stimulates UBE3A ubiquitin activity. Interacts with host BAK1. Interacts with human FBLN1.

The protein localises to the host cytoplasm. It is found in the host nucleus. Functionally, plays a major role in the induction and maintenance of cellular transformation. E6 associates with host UBE3A/E6-AP ubiquitin-protein ligase and modulates its activity. Protects host keratinocytes from apoptosis by mediating the degradation of host BAK1. May also inhibit host immune response. The protein is Protein E6 of Bos taurus (Bovine).